The primary structure comprises 181 residues: Probable nicotinate-nucleotide adenylyltransferase (181 aa).

It belongs to the NadD family.

The enzyme catalyses nicotinate beta-D-ribonucleotide + ATP + H(+) = deamido-NAD(+) + diphosphate. The protein operates within cofactor biosynthesis; NAD(+) biosynthesis; deamido-NAD(+) from nicotinate D-ribonucleotide: step 1/1. In terms of biological role, catalyzes the reversible adenylation of nicotinate mononucleotide (NaMN) to nicotinic acid adenine dinucleotide (NaAD). The protein is Probable nicotinate-nucleotide adenylyltransferase of Campylobacter jejuni subsp. jejuni serotype O:6 (strain 81116 / NCTC 11828).